We begin with the raw amino-acid sequence, 484 residues long: MRGARPDEFNFSTNPSTPNTGQPTPTYPAGVGGGGGGRKKGVGVRTWLVLNSSGQSEPKEEGKHSIMRRTGLPARDLRILDPLLSYPSTVLGRERAIVINLEHIKAIITAQEVLLLNSKDPSVSPFIDELQRRILCHHHATKPQEEQNSGGEPHTRVDPAQGEAGTEQSSGDQGSEAKKDAKQSLENQDGSKVLPFEFVALEACLEAASSSLEHEALRLELEAHPALDKLTSKISTLNLERVRQIKSRLVAITGRVQKVRDELEHLLDDDEDMAEMYLTEKLAQKLEDSSNSSMNESDTFEVDLPQGDEDDRLPPEFASEANRDGRYLQANDAHELLMSTQSALSRNSRGTHTSSTRSAMTNKLDVEELEMLLEAYFVQIDGILNKLSTLREYVDDTEDYINIMLDDKQNHLLQMGVMLTTATLVMSAFIAVAGVFGMNITIELFTDNKHGPSRFIWTVIGGSIGSICLYVGAIGWCKYKRLLE.

Disordered regions lie at residues 1-40 and 141-186; these read MRGA…GRKK and TKPQ…QSLE. The span at 10–24 shows a compositional bias: polar residues; it reads NFSTNPSTPNTGQPT. Residues 203-275 adopt a coiled-coil conformation; it reads ACLEAASSSL…LLDDDEDMAE (73 aa). The interval 286-320 is disordered; it reads LEDSSNSSMNESDTFEVDLPQGDEDDRLPPEFASE. The segment covering 298-311 has biased composition (acidic residues); sequence DTFEVDLPQGDEDD. The chain crosses the membrane as a helical span at residues 416 to 436; that stretch reads GVMLTTATLVMSAFIAVAGVF. Positions 437–439 match the Required for magnesium transport activity motif; the sequence is GMN. The chain crosses the membrane as a helical span at residues 455–475; sequence FIWTVIGGSIGSICLYVGAIG.

This sequence belongs to the CorA metal ion transporter (MIT) (TC 1.A.35.5) family. As to expression, expressed in the whole plant.

Its subcellular location is the membrane. Its function is as follows. Magnesium transporter that may mediate the influx of magnesium. This chain is Magnesium transporter MRS2-3 (MRS2-3), found in Arabidopsis thaliana (Mouse-ear cress).